The chain runs to 79 residues: Conotoxin VnMEKL-024 (79 aa).

A signal peptide spans methionine 1–alanine 19. Residues leucine 20 to glutamate 50 constitute a propeptide that is removed on maturation. 3 disulfides stabilise this stretch: cysteine 51–cysteine 65, cysteine 58–cysteine 69, and cysteine 64–cysteine 76.

The protein belongs to the conotoxin O2 superfamily. As to expression, expressed by the venom duct.

Its subcellular location is the secreted. In Conus ventricosus (Mediterranean cone), this protein is Conotoxin VnMEKL-024.